The sequence spans 148 residues: Gastrin-releasing peptide (148 aa).

The N-terminal stretch at 1-23 (MRGRELPLVLLALVLCLAPRGRA) is a signal peptide. Methionine 50 carries the methionine amide modification. A propeptide spanning residues 54 to 148 (STGESSSVSE…EGRNPQLNQQ (95 aa)) is cleaved from the precursor. The interval 89–148 (EAKENRNHQPPQPKALGNQQPSWDSEDSSNFKDVGSKGKVGRLSAPGSQREGRNPQLNQQ) is disordered.

The protein belongs to the bombesin/neuromedin-B/ranatensin family.

It is found in the secreted. The protein resides in the cytoplasmic vesicle. The protein localises to the secretory vesicle lumen. Its subcellular location is the cell projection. It localises to the neuron projection. In terms of biological role, stimulates the release of gastrin and other gastrointestinal hormones. Contributes to the perception of prurient stimuli and to the transmission of itch signals in the spinal cord that promote scratching behavior. Contributes primarily to nonhistaminergic itch sensation. In one study, shown to act in the amygdala as part of an inhibitory network which inhibits memory specifically related to learned fear. In another study, shown to act on vasoactive intestinal peptide (VIP)-expressing cells in the auditory cortex, most likely via extrasynaptic diffusion from local and long-range sources, to mediate disinhibition of glutamatergic cells via VIP cell-specific GRPR signaling which leads to enhanced auditory fear memories. Contributes to the regulation of food intake. Inhibits voltage-gated sodium channels but enhances voltage-gated potassium channels in hippocampal neurons. Induces sighing by acting directly on the pre-Botzinger complex, a cluster of several thousand neurons in the ventrolateral medulla responsible for inspiration during respiratory activity. Induces an itch response through activation of receptors present on mast cells, triggering mast cell degranulation. This chain is Gastrin-releasing peptide (GRP), found in Homo sapiens (Human).